Consider the following 176-residue polypeptide: MTEAGAKKAAGKKSGKGKGKNAKKNQPNITPVAENRKAKFRYEILDSVECGMMLMGSEVKSMREGKLSLDEAHIRVTNGELWLVGSDIAHYNNAGMWNHDPRRPRKLLVHAKEFDKFAGRAFERGLTLIPLRVYFSERGLAKCVMGLVKGKKLHDKRETIKKRESDRGLQRAMRRK.

Residues 1–33 (MTEAGAKKAAGKKSGKGKGKNAKKNQPNITPVA) are disordered. Over residues 9 to 23 (AAGKKSGKGKGKNAK) the composition is skewed to basic residues.

Belongs to the SmpB family.

The protein localises to the cytoplasm. In terms of biological role, required for rescue of stalled ribosomes mediated by trans-translation. Binds to transfer-messenger RNA (tmRNA), required for stable association of tmRNA with ribosomes. tmRNA and SmpB together mimic tRNA shape, replacing the anticodon stem-loop with SmpB. tmRNA is encoded by the ssrA gene; the 2 termini fold to resemble tRNA(Ala) and it encodes a 'tag peptide', a short internal open reading frame. During trans-translation Ala-aminoacylated tmRNA acts like a tRNA, entering the A-site of stalled ribosomes, displacing the stalled mRNA. The ribosome then switches to translate the ORF on the tmRNA; the nascent peptide is terminated with the 'tag peptide' encoded by the tmRNA and targeted for degradation. The ribosome is freed to recommence translation, which seems to be the essential function of trans-translation. The chain is SsrA-binding protein from Rhodopirellula baltica (strain DSM 10527 / NCIMB 13988 / SH1).